We begin with the raw amino-acid sequence, 466 residues long: Soluble pyridine nucleotide transhydrogenase (466 aa).

Residue 36 to 45 (ERYHNIGGGC) participates in FAD binding.

This sequence belongs to the class-I pyridine nucleotide-disulfide oxidoreductase family. FAD serves as cofactor.

It localises to the cytoplasm. It carries out the reaction NAD(+) + NADPH = NADH + NADP(+). Its function is as follows. Conversion of NADPH, generated by peripheral catabolic pathways, to NADH, which can enter the respiratory chain for energy generation. This is Soluble pyridine nucleotide transhydrogenase from Erwinia tasmaniensis (strain DSM 17950 / CFBP 7177 / CIP 109463 / NCPPB 4357 / Et1/99).